The chain runs to 1737 residues: Intraflagellar transport protein osm-1 (1737 aa).

WD repeat units lie at residues 14-53 (DGEA…KDRF), 63-103 (GKKS…NEKK), 110-150 (VQPS…SLYK), 151-189 (TDET…QSKI), 191-229 (TLQV…QQFD), 233-273 (QSEK…WDEG), and 511-553 (DQRS…EQVT). TPR repeat units follow at residues 700–737 (NDTE…KTSY), 803–836 (SQLY…GKAI), 848–881 (VTLE…KKAV), 907–940 (TGYY…NDAI), 979–1012 (HGRF…DDVL), 1037–1070 (RGDL…SDAY), and 1137–1170 (GTVH…ELAV).

It belongs to the IFT172 family. As to quaternary structure, component of the IFT complex B composed of at least che-2, che-13, dyf-1, dyf-3, dyf-6, dyf-11, dyf-13, ift-20, ift-74, ift-81, ifta-2, osm-1, osm-5 and osm-6. In terms of tissue distribution, expressed in amphid and phasmid chemosensory neurons, where it appears to concentrate at the base of the transition zones, which correspond to the basal bodies of motile and sensory cilia. Moves in the retrograde direction along cilia and dendrites, suggesting that it is retrieved from the distal endings of the cilia by a retrograde transport pathway that moves it along cilia and then dendrites, back to the neuronal cell body.

Its subcellular location is the cell projection. It localises to the cilium. In terms of biological role, component of the intraflagellar transport (IFT) complex B required for transport of proteins in the motile cilium. May be required for ciliary entrance and transport of specific ciliary cargo proteins such as che-3 which are related to motility. Required for the maintenance and formation of chemosensory cilia that detect chemosensory cues. This is Intraflagellar transport protein osm-1 from Caenorhabditis elegans.